A 176-amino-acid polypeptide reads, in one-letter code: Ribosome maturation factor RimM (176 aa).

The 75-residue stretch at 95–169 (EDEVYLFELE…TARIAPPPGL (75 aa)) folds into the PRC barrel domain.

This sequence belongs to the RimM family. As to quaternary structure, binds ribosomal protein uS19.

It is found in the cytoplasm. In terms of biological role, an accessory protein needed during the final step in the assembly of 30S ribosomal subunit, possibly for assembly of the head region. Essential for efficient processing of 16S rRNA. May be needed both before and after RbfA during the maturation of 16S rRNA. It has affinity for free ribosomal 30S subunits but not for 70S ribosomes. This chain is Ribosome maturation factor RimM, found in Nitratidesulfovibrio vulgaris (strain ATCC 29579 / DSM 644 / CCUG 34227 / NCIMB 8303 / VKM B-1760 / Hildenborough) (Desulfovibrio vulgaris).